The sequence spans 591 residues: Guanylate-binding protein 2 (591 aa).

A GTPase domain (Globular) region spans residues 1–309 (MAPEINLPGP…NAISSGDLPC (309 aa)). The GB1/RHD3-type G domain maps to 35–276 (TQPVVVVAIV…FCSYILSHSN (242 aa)). Residues 45 to 52 (GLYRTGKS), 181 to 182 (RD), and L245 contribute to the GTP site. C588 bears the Cysteine methyl ester mark. C588 is lipidated: S-geranylgeranyl cysteine. Residues 589–591 (NIL) constitute a propeptide, removed in mature form.

This sequence belongs to the TRAFAC class dynamin-like GTPase superfamily. GB1/RHD3 GTPase family. GB1 subfamily. In terms of assembly, homodimer; homodimerization occurs upon GTP-binding and is required for the association with membranous structures. Heterodimer with other family members, including GBP1, GBP3, GBP4 and GBP5. Post-translationally, (Microbial infection) Ubiquitinated by S.flexneri IpaH9.8, leading to its degradation by the proteasome, thereby preventing its ability to promote host defense against bacterial infection. In terms of processing, isoprenylation is required for proper subcellular location.

The protein resides in the cytoplasmic vesicle membrane. Its subcellular location is the golgi apparatus membrane. It is found in the cytoplasm. The protein localises to the perinuclear region. The catalysed reaction is GTP + H2O = GDP + phosphate + H(+). In terms of biological role, interferon (IFN)-inducible GTPase that plays important roles in innate immunity against a diverse range of bacterial, viral and protozoan pathogens. Hydrolyzes GTP to GMP in 2 consecutive cleavage reactions, but the major reaction product is GDP. Following infection, recruited to the pathogen-containing vacuoles or vacuole-escaped bacteria and acts as a positive regulator of inflammasome assembly by promoting the release of inflammasome ligands from bacteria. Acts by promoting lysis of pathogen-containing vacuoles, releasing pathogens into the cytosol. Following pathogen release in the cytosol, promotes recruitment of proteins that mediate bacterial cytolysis: this liberates ligands that are detected by inflammasomes, such as lipopolysaccharide (LPS) that activates the non-canonical CASP4/CASP11 inflammasome or double-stranded DNA (dsDNA) that activates the AIM2 inflammasome. Confers protection to the protozoan pathogen Toxoplasma gondii. Independently of its GTPase activity, acts as an inhibitor of various viruses infectivity, such as HIV-1, Zika and influenza A viruses, by inhibiting FURIN-mediated maturation of viral envelope proteins. The polypeptide is Guanylate-binding protein 2 (Homo sapiens (Human)).